A 317-amino-acid chain; its full sequence is ATP synthase gamma chain (317 aa).

It belongs to the ATPase gamma chain family. As to quaternary structure, F-type ATPases have 2 components, CF(1) - the catalytic core - and CF(0) - the membrane proton channel. CF(1) has five subunits: alpha(3), beta(3), gamma(1), delta(1), epsilon(1). CF(0) has three main subunits: a, b and c.

Its subcellular location is the cellular thylakoid membrane. Its function is as follows. Produces ATP from ADP in the presence of a proton gradient across the membrane. The gamma chain is believed to be important in regulating ATPase activity and the flow of protons through the CF(0) complex. The polypeptide is ATP synthase gamma chain (Synechococcus sp. (strain CC9311)).